The sequence spans 133 residues: Large ribosomal subunit protein uL11 (133 aa).

The protein belongs to the universal ribosomal protein uL11 family. As to quaternary structure, part of the ribosomal stalk of the 50S ribosomal subunit. Interacts with L10 and the large rRNA to form the base of the stalk. L10 forms an elongated spine to which 2 L12 dimers bind in a sequential fashion forming a pentameric L10(L12)2(L12)2 complex. Post-translationally, one or more lysine residues are methylated.

Functionally, forms part of the ribosomal stalk which helps the ribosome interact with GTP-bound translation factors. The polypeptide is Large ribosomal subunit protein uL11 (Geobacillus stearothermophilus (Bacillus stearothermophilus)).